Here is a 302-residue protein sequence, read N- to C-terminus: Vomeronasal type-1 receptor 48 (302 aa).

Residues 1–16 (MNENSRLHTHSNIRNT) lie on the Extracellular side of the membrane. The chain crosses the membrane as a helical span at residues 17–37 (FFSEIGIGISGNSFLLLFHII). The Cytoplasmic portion of the chain corresponds to 38–49 (KFFRGHRPRLTD). Residues 50–70 (LPIGLLSLIHLLMLLVAAVIA) traverse the membrane as a helical segment. The Extracellular segment spans residues 71–91 (TDIFISWRGWNDIICKFLVYL). An intrachain disulfide couples C85 to C172. Residues 92–114 (YRSLRGLSLCTTSMLSVLQAIIL) form a helical membrane-spanning segment. Residues 115–131 (SPRSYCLAKFKRKSSHN) lie on the Cytoplasmic side of the membrane. A helical membrane pass occupies residues 132 to 152 (ISCAIIFLSVLYMSISSHLLI). The Extracellular portion of the chain corresponds to 153 to 193 (SITATPNLTMNDFLYVSQSCSLLPLSYLMQSIYSTLLVLRE). N159 carries an N-linked (GlcNAc...) asparagine glycan. Residues 194-214 (VFLIGLMVLSTSYMVALLYMH) traverse the membrane as a helical segment. Residues 215–238 (RKQAQNLQGTSLSLKASAEQRATQ) are Cytoplasmic-facing. The helical transmembrane segment at 239-259 (TILMLMTFFVLMSIFDSIVSC) threads the bilayer. Topologically, residues 260–269 (SRTMFLDDPT) are extracellular. Residues 270–290 (SYSIHIFVMHIYATVSPFVFI) traverse the membrane as a helical segment. Residues 291–302 (STEKHIVNILRG) lie on the Cytoplasmic side of the membrane.

It belongs to the G-protein coupled receptor 1 family.

It localises to the cell membrane. Putative pheromone receptor implicated in the regulation of social and reproductive behavior. The sequence is that of Vomeronasal type-1 receptor 48 (Vmn1r48) from Mus musculus (Mouse).